The sequence spans 308 residues: Bifunctional protein FolD (308 aa).

Residues 175–177 (GRS), S200, and I241 contribute to the NADP(+) site.

Belongs to the tetrahydrofolate dehydrogenase/cyclohydrolase family. As to quaternary structure, homodimer.

It catalyses the reaction (6R)-5,10-methylene-5,6,7,8-tetrahydrofolate + NADP(+) = (6R)-5,10-methenyltetrahydrofolate + NADPH. It carries out the reaction (6R)-5,10-methenyltetrahydrofolate + H2O = (6R)-10-formyltetrahydrofolate + H(+). It participates in one-carbon metabolism; tetrahydrofolate interconversion. In terms of biological role, catalyzes the oxidation of 5,10-methylenetetrahydrofolate to 5,10-methenyltetrahydrofolate and then the hydrolysis of 5,10-methenyltetrahydrofolate to 10-formyltetrahydrofolate. This chain is Bifunctional protein FolD, found in Jannaschia sp. (strain CCS1).